Reading from the N-terminus, the 514-residue chain is Histidine ammonia-lyase (514 aa).

A cross-link (5-imidazolinone (Ala-Gly)) is located at residues 142-144 (ASG). S143 bears the 2,3-didehydroalanine (Ser) mark.

This sequence belongs to the PAL/histidase family. In terms of processing, contains an active site 4-methylidene-imidazol-5-one (MIO), which is formed autocatalytically by cyclization and dehydration of residues Ala-Ser-Gly.

The protein localises to the cytoplasm. The enzyme catalyses L-histidine = trans-urocanate + NH4(+). The protein operates within amino-acid degradation; L-histidine degradation into L-glutamate; N-formimidoyl-L-glutamate from L-histidine: step 1/3. This is Histidine ammonia-lyase from Sorangium cellulosum (strain So ce56) (Polyangium cellulosum (strain So ce56)).